Consider the following 235-residue polypeptide: Large ribosomal subunit protein uL1 (235 aa).

This sequence belongs to the universal ribosomal protein uL1 family. As to quaternary structure, part of the 50S ribosomal subunit.

Its function is as follows. Binds directly to 23S rRNA. The L1 stalk is quite mobile in the ribosome, and is involved in E site tRNA release. In terms of biological role, protein L1 is also a translational repressor protein, it controls the translation of the L11 operon by binding to its mRNA. The chain is Large ribosomal subunit protein uL1 from Prochlorococcus marinus (strain AS9601).